A 255-amino-acid polypeptide reads, in one-letter code: Electron transfer flavoprotein beta subunit lysine methyltransferase (255 aa).

The transit peptide at 1 to 32 (MAFSLCWKAPRSQWSFLQALNSGFPLFPWRTV) directs the protein to the mitochondrion.

The protein belongs to the methyltransferase superfamily. ETFBKMT family. In terms of assembly, interacts with HSPD1; this protein may possibly be a methylation substrate.

It is found in the cytoplasm. Its subcellular location is the mitochondrion matrix. The catalysed reaction is L-lysyl-[protein] + 3 S-adenosyl-L-methionine = N(6),N(6),N(6)-trimethyl-L-lysyl-[protein] + 3 S-adenosyl-L-homocysteine + 3 H(+). Functionally, protein-lysine methyltransferase that selectively trimethylates the flavoprotein ETFB in mitochondria. Thereby, may negatively regulate the function of ETFB in electron transfer from Acyl-CoA dehydrogenases to the main respiratory chain. The sequence is that of Electron transfer flavoprotein beta subunit lysine methyltransferase from Rattus norvegicus (Rat).